Reading from the N-terminus, the 710-residue chain is mRNA export factor crp79 (710 aa).

2 consecutive RRM domains span residues 19-102 and 222-292; these read IYVG…KLTI and HFKQ…PTTP. The span at 333–348 shows a compositional bias: polar residues; the sequence is QWGSVSTTGVSNQQNH. Residues 333–357 are disordered; that stretch reads QWGSVSTTGVSNQQNHPAAWNPDNK. Positions 401 to 474 constitute an RRM 3 domain; sequence EDLFSPFGSI…DRIRRLQAFF (74 aa). Residues 502-524 are compositionally biased toward polar residues; it reads TIRKPIESSTNKISENPTTLSSK. Residues 502–544 are disordered; it reads TIRKPIESSTNKISENPTTLSSKVENKNEPKTGENKEPSQTNE. Residues 525–538 are compositionally biased toward basic and acidic residues; sequence VENKNEPKTGENKE.

Its subcellular location is the cytoplasm. The protein resides in the nucleus. Functionally, binds the poly(A) tail of mRNA. Involved in the export of mRNA from the nucleus to the cytoplasm. The sequence is that of mRNA export factor crp79 (crp79) from Schizosaccharomyces pombe (strain 972 / ATCC 24843) (Fission yeast).